The chain runs to 238 residues: Ditrans,polycis-undecaprenyl-diphosphate synthase ((2E,6E)-farnesyl-diphosphate specific) (238 aa).

Asp14 is a catalytic residue. Asp14 provides a ligand contact to Mg(2+). Substrate is bound by residues 15-18, Trp19, Arg27, His31, and 59-61; these read GNGR and SSE. The active-site Proton acceptor is Asn62. Substrate-binding positions include Trp63, Arg65, Arg182, and 188–190; that span reads RIS. Residue Glu201 participates in Mg(2+) binding.

This sequence belongs to the UPP synthase family. As to quaternary structure, homodimer. Requires Mg(2+) as cofactor.

The catalysed reaction is 8 isopentenyl diphosphate + (2E,6E)-farnesyl diphosphate = di-trans,octa-cis-undecaprenyl diphosphate + 8 diphosphate. Its function is as follows. Catalyzes the sequential condensation of isopentenyl diphosphate (IPP) with (2E,6E)-farnesyl diphosphate (E,E-FPP) to yield (2Z,6Z,10Z,14Z,18Z,22Z,26Z,30Z,34E,38E)-undecaprenyl diphosphate (di-trans,octa-cis-UPP). UPP is the precursor of glycosyl carrier lipid in the biosynthesis of bacterial cell wall polysaccharide components such as peptidoglycan and lipopolysaccharide. The chain is Ditrans,polycis-undecaprenyl-diphosphate synthase ((2E,6E)-farnesyl-diphosphate specific) from Legionella pneumophila subsp. pneumophila (strain Philadelphia 1 / ATCC 33152 / DSM 7513).